The following is a 616-amino-acid chain: Tumor necrosis factor receptor superfamily member 11A (616 aa).

The signal sequence occupies residues 1–29; it reads MAPRARRRRPLFALLLLCALLARLQVALQ. Residues 30–212 lie on the Extracellular side of the membrane; the sequence is IAPPCTSEKH…PPNEPHVYLP (183 aa). Disulfide bonds link Cys34–Cys46, Cys47–Cys60, Cys50–Cys68, Cys71–Cys86, Cys92–Cys112, Cys114–Cys127, Cys124–Cys126, Cys133–Cys151, and Cys154–Cys169. TNFR-Cys repeat units lie at residues 34–68, 71–112, 114–151, and 154–194; these read CTSE…DSVC, CGPD…PRRC, CTAG…DTVC, and CLAG…DAVC. N-linked (GlcNAc...) asparagine glycosylation is present at Asn105. Residues Cys133, Ala134, and Ser160 each coordinate Na(+). Asn174 carries an N-linked (GlcNAc...) asparagine glycan. Residues Cys175 and Cys194 are joined by a disulfide bond. Residues 213-233 form a helical membrane-spanning segment; the sequence is GLIILLLFASVALVAAIIFGV. Residues 234–616 lie on the Cytoplasmic side of the membrane; it reads CYRKKGKALT…PVQEQGGAKA (383 aa). The tract at residues 468-536 is disordered; sequence PLPQCAYGMG…GNSNSTFISS (69 aa). Basic and acidic residues predominate over residues 483-493; that stretch reads EASRTEARDQP. Over residues 499-508 the composition is skewed to low complexity; it reads GRLPSSARAG. Residues 524 to 536 are compositionally biased toward polar residues; that stretch reads NVTGNSNSTFISS. Residues 544–549 are required for interaction with EEIG1 and osteoclast differentiation; it reads GDIIVV. Positions 556 to 616 are disordered; the sequence is QEGAAAAAEP…PVQEQGGAKA (61 aa). Over residues 570-580 the composition is skewed to basic and acidic residues; the sequence is VQEETLARRDS. Ser580 is subject to Phosphoserine.

Binds to the clefts between the subunits of the TNFSF11 ligand trimer to form a heterohexamer. Part of a complex composed of EEIG1, TNFRSF11A/RANK, PLCG2, GAB2, TEC and BTK; complex formation increases in the presence of TNFSF11/RANKL. Interacts with TRAF1, TRAF2, TRAF3, TRAF5 and TRAF6. Interacts (via cytoplasmic domain) with GAB2. Interacts (via cytoplasmic domain); with EEIG1 (via N-terminus); when in the presence of TNFSF11/RANKL. Ubiquitous expression with high levels in skeletal muscle, thymus, liver, colon, small intestine and adrenal gland.

Its subcellular location is the cell membrane. The protein resides in the membrane raft. Receptor for TNFSF11/RANKL/TRANCE/OPGL; essential for RANKL-mediated osteoclastogenesis. Its interaction with EEIG1 promotes osteoclastogenesis via facilitating the transcription of NFATC1 and activation of PLCG2. Involved in the regulation of interactions between T-cells and dendritic cells. In Homo sapiens (Human), this protein is Tumor necrosis factor receptor superfamily member 11A (TNFRSF11A).